A 505-amino-acid chain; its full sequence is Ribosomal RNA small subunit methyltransferase F (505 aa).

S-adenosyl-L-methionine contacts are provided by residues 123–129 (ASAPGSK), E147, D174, and D192. The Nucleophile role is filled by C245. The interval 409–437 (GTNANNNSNTNPNNNANTNPNNNSNTNPR) is disordered. Positions 410–435 (TNANNNSNTNPNNNANTNPNNNSNTN) are enriched in low complexity.

Belongs to the class I-like SAM-binding methyltransferase superfamily. RsmB/NOP family.

The protein resides in the cytoplasm. The enzyme catalyses cytidine(1407) in 16S rRNA + S-adenosyl-L-methionine = 5-methylcytidine(1407) in 16S rRNA + S-adenosyl-L-homocysteine + H(+). Specifically methylates the cytosine at position 1407 (m5C1407) of 16S rRNA. This Shewanella denitrificans (strain OS217 / ATCC BAA-1090 / DSM 15013) protein is Ribosomal RNA small subunit methyltransferase F.